We begin with the raw amino-acid sequence, 451 residues long: MTIMKKRVRKRLSPVQLIAAGFFILILFGGSLLTLPFFSRSGESTHFIDALFTATSAVCVTGLTTLNTAEHWNSAGQFLIMTLIEIGGLGFMMIPILFFAIAKKKISFSMRIVLKEALNLEEMSGVIKLMIYILKFAVVIQVIGAVALSVVFIPEFGWAKGIWFSIFHAVSSFCNAGFDLLGDSLLADQTNVYLIMVVSALIIAGGLGFIVWRDILSYHRVKKITLHSKVALSVTALLLIGGFILFLITERNGLTLVKGTFTERLANTFFMSVTPRTAGYYSIDYLQMSHAGLILTMFLMYIGGTSGSTAGGLKTTTLGILLIQMHAMFKGKTRAEAFGRTIRQAAVLRALTLFFVTLSLCVVAIMVLSVTETIPKTSGIEYIAFEVFSAFGTVGLTMGLTPDLTLIGKLVIISLMYIGRVGIMTVVFSLLVKANRAEANYKYPEESIMLG.

A run of 11 helical transmembrane segments spans residues 18–38, 46–66, 78–98, 133–153, 162–182, 192–212, 230–250, 293–313, 350–370, 380–400, and 410–430; these read IAAG…LPFF, HFID…LTTL, FLIM…PILF, ILKF…VVFI, IWFS…DLLG, VYLI…FIVW, VALS…LITE, LILT…AGGL, ALTL…VLSV, IEYI…TMGL, and LVII…VFSL.

It belongs to the TrkH potassium transport family.

The protein localises to the cell membrane. Its function is as follows. Mediates electrogenic transport of potassium as well as sodium. Acts probably as a potassium-sodium cotransporter. Major sodium reentry pathway at high pH values. This chain is Potassium/sodium uptake protein NtpJ (ntpJ), found in Enterococcus hirae (strain ATCC 9790 / DSM 20160 / JCM 8729 / LMG 6399 / NBRC 3181 / NCIMB 6459 / NCDO 1258 / NCTC 12367 / WDCM 00089 / R).